The primary structure comprises 279 residues: MTFWNEIYAHFDPVAFSIFGLKVHWYGLMYVLALLVALYMAKFFVKKDRLKFSNQVLENYFIWVEIGVILGARFGYILIYSNAQIFYLTHPWEIFNPFYNGKFVGISGMSYHGAVIGFIIATILFCRKKRQNLWSLLDLCALSIPLGYFFGRIGNFLNQELFGRITDVSWGILVNGELRHPSQLYEACLEGITIFLILYFYRKYKKFDGELICVYVILYAIFRFLTEFLREADVQIGYFSFGLSLGQILSVFMLILGFSAYIKLLKNSQTEQKFNQNKS.

Helical transmembrane passes span 25-45 (WYGLMYVLALLVALYMAKFFV), 60-80 (YFIWVEIGVILGARFGYILIY), 103-123 (FVGISGMSYHGAVIGFIIATI), 133-153 (LWSLLDLCALSIPLGYFFGRI), 181-201 (PSQLYEACLEGITIFLILYFY), 209-229 (GELICVYVILYAIFRFLTEFL), and 236-256 (IGYFSFGLSLGQILSVFMLIL). Arg-152 is an a 1,2-diacyl-sn-glycero-3-phospho-(1'-sn-glycerol) binding site.

It belongs to the Lgt family.

The protein localises to the cell inner membrane. The enzyme catalyses L-cysteinyl-[prolipoprotein] + a 1,2-diacyl-sn-glycero-3-phospho-(1'-sn-glycerol) = an S-1,2-diacyl-sn-glyceryl-L-cysteinyl-[prolipoprotein] + sn-glycerol 1-phosphate + H(+). It participates in protein modification; lipoprotein biosynthesis (diacylglyceryl transfer). Catalyzes the transfer of the diacylglyceryl group from phosphatidylglycerol to the sulfhydryl group of the N-terminal cysteine of a prolipoprotein, the first step in the formation of mature lipoproteins. This is Phosphatidylglycerol--prolipoprotein diacylglyceryl transferase from Campylobacter hominis (strain ATCC BAA-381 / DSM 21671 / CCUG 45161 / LMG 19568 / NCTC 13146 / CH001A).